A 719-amino-acid polypeptide reads, in one-letter code: NF-kappa-B inhibitor zeta (719 aa).

Residues 46–81 (GACDGGCSASGPSAPGSPGSDSSDFSSASSVSSCGA) show a composition bias toward low complexity. Positions 46 to 97 (GACDGGCSASGPSAPGSPGSDSSDFSSASSVSSCGAVESRPRGGARAERLQV) are disordered. Residues 84-97 (SRPRGGARAERLQV) are compositionally biased toward basic and acidic residues. Positions 108 to 130 (RGPFQGVRVKNSVKELLLHIRSH) constitute an OCA domain. A Nuclear localization signal motif is present at residues 164–179 (KRKGSDSLSDGPACKR). Disordered regions lie at residues 188 to 210 (LTPP…ESKQ) and 289 to 343 (YSPQ…FAPL). Residues 201–210 (EDVHHNESKQ) are compositionally biased toward basic and acidic residues. The interval 322 to 394 (SYEPHLFGRE…LARPDASSTP (73 aa)) is required for transcriptional activity. The interval 405-719 (GGNPMSTTQL…KSIQQRAPPY (315 aa)) is interaction with NFKB1/p50. 7 ANK repeats span residues 444-473 (DGDT…ALHM), 480-509 (NGQS…QVNT), 513-542 (WGRT…GSNQ), 552-581 (DGLT…HSPE), 583-608 (QELL…AVEA), 613-642 (SGRT…CLSF), and 649-682 (NGNT…DPST).

In terms of assembly, interacts with NFKB1/p50. Interacts with RELA. Interacts with AKIRIN2.

The protein resides in the nucleus. Its function is as follows. Involved in regulation of NF-kappa-B transcription factor complexes. Inhibits NF-kappa-B activity without affecting its nuclear translocation upon stimulation. Inhibits DNA-binding of RELA and NFKB1/p50, and of the NF-kappa-B p65-p50 heterodimer and the NF-kappa-B p50-p50 homodimer. Also seems to activate NF-kappa-B-mediated transcription. In vitro, upon association with NFKB1/p50 has transcriptional activation activity and, together with NFKB1/p50 and RELA, is recruited to LCN2 promoters. Promotes transcription of LCN2 and DEFB4. Is recruited to IL-6 promoters and activates IL-6 but decreases TNF-alpha production in response to LPS. Seems to be involved in the induction of inflammatory genes activated through TLR/IL-1 receptor signaling. Involved in the induction of T helper 17 cells (Th17) differentiation upon recognition of antigen by T cell antigen receptor (TCR). The polypeptide is NF-kappa-B inhibitor zeta (NFKBIZ) (Bos taurus (Bovine)).